Reading from the N-terminus, the 1258-residue chain is Regulator of G-protein signaling 22 (1258 aa).

Positions 581–604 (QQLGRSEPLNAVSSKDGGLEKGSK) are disordered. RGS domains follow at residues 845–973 (TFTD…ASRQ) and 1014–1138 (AFRK…TDEK). The interval 1145–1172 (RRQEHKQKRKASDTEEDKAGKSGVKQYA) is disordered. The span at 1154–1164 (KASDTEEDKAG) shows a compositional bias: basic and acidic residues.

As to quaternary structure, interacts with GNA11, GNA12 and GNA13. As to expression, expressed testis, including in Leydig cells and spermatogenic cells from the spermatogonia to spermatid stages (at protein level).

The protein localises to the cytoplasm. Its subcellular location is the nucleus. Inhibits signal transduction by increasing the GTPase activity of G protein alpha subunits thereby driving them into their inactive GDP-bound form. The protein is Regulator of G-protein signaling 22 (Rgs22) of Mus musculus (Mouse).